The chain runs to 216 residues: Thiopurine S-methyltransferase (216 aa).

Residues W10, L45, E66, and R123 each coordinate S-adenosyl-L-methionine.

The protein belongs to the class I-like SAM-binding methyltransferase superfamily. TPMT family.

The protein resides in the cytoplasm. It carries out the reaction S-adenosyl-L-methionine + a thiopurine = S-adenosyl-L-homocysteine + a thiopurine S-methylether.. The sequence is that of Thiopurine S-methyltransferase from Pseudomonas putida (strain GB-1).